Consider the following 199-residue polypeptide: Cell division protein SepF (199 aa).

The interval 15–79 is disordered; sequence TEDGDETEVQ…PQPQQKSSTE (65 aa).

This sequence belongs to the SepF family. As to quaternary structure, homodimer. Interacts with FtsZ.

The protein resides in the cytoplasm. Functionally, cell division protein that is part of the divisome complex and is recruited early to the Z-ring. Probably stimulates Z-ring formation, perhaps through the cross-linking of FtsZ protofilaments. Its function overlaps with FtsA. The chain is Cell division protein SepF from Streptococcus sanguinis (strain SK36).